The sequence spans 598 residues: Aspartate--tRNA(Asp/Asn) ligase (598 aa).

E172 contacts L-aspartate. The aspartate stretch occupies residues 196–199; sequence QLFK. R218 contacts L-aspartate. ATP-binding positions include 218–220 and Q227; that span reads RDE. An L-aspartate-binding site is contributed by H455. E489 is a binding site for ATP. Residue R496 participates in L-aspartate binding. An ATP-binding site is contributed by 541–544; sequence GLDR.

It belongs to the class-II aminoacyl-tRNA synthetase family. Type 1 subfamily. Homodimer.

It is found in the cytoplasm. It carries out the reaction tRNA(Asx) + L-aspartate + ATP = L-aspartyl-tRNA(Asx) + AMP + diphosphate. In terms of biological role, aspartyl-tRNA synthetase with relaxed tRNA specificity since it is able to aspartylate not only its cognate tRNA(Asp) but also tRNA(Asn). Reaction proceeds in two steps: L-aspartate is first activated by ATP to form Asp-AMP and then transferred to the acceptor end of tRNA(Asp/Asn). This Burkholderia mallei (strain ATCC 23344) protein is Aspartate--tRNA(Asp/Asn) ligase.